A 127-amino-acid polypeptide reads, in one-letter code: MRHYEIVFIVHPDQSEQVPAMIERYRANIAARGGNVHRLEDWGRRQMAYPIQKVHKAHYVLMNIECDQETLEELEHGFKFNDAVLRHLTIKRDAAVTAASPMMKEEKARDLLQGAKADAPAEQPAAA.

The segment at 101-127 (PMMKEEKARDLLQGAKADAPAEQPAAA) is disordered. The segment covering 115 to 127 (AKADAPAEQPAAA) has biased composition (low complexity).

The protein belongs to the bacterial ribosomal protein bS6 family.

Binds together with bS18 to 16S ribosomal RNA. The chain is Small ribosomal subunit protein bS6 from Thiobacillus denitrificans (strain ATCC 25259 / T1).